Here is a 327-residue protein sequence, read N- to C-terminus: Protein EMSY-LIKE 1 (327 aa).

The ENT domain occupies 1–88 (METQIHQLEQ…HATIQPFDVL (88 aa)). The stretch at 32–58 (ESLITELRKELRVSDDEHRELLSRVNK) forms a coiled coil. Disordered stretches follow at residues 206-257 (GHGS…SDDI) and 305-327 (ADTS…MPQG). Basic residues predominate over residues 214 to 232 (GNRRGQIHGGRGRGPRIHQ). Residues 281–306 (LELDKAKKMLKEHEQALIAAIARLAD) adopt a coiled-coil conformation. Position 308 is a phosphoserine (serine 308). Residues 318–327 (YSHDHPMPQG) show a composition bias toward basic and acidic residues.

In terms of assembly, isoform 1 interacts with EDM2 in nucleus.

The protein resides in the nucleus. Probably involved in the regulation of chromatin states. Contributes to RPP7-mediated and basal immunity, especially against Hyaloperonospora arabidopsidis isolate Hiks1. Regulates negatively EDM2-dependent floral transition. The sequence is that of Protein EMSY-LIKE 1 from Arabidopsis thaliana (Mouse-ear cress).